A 199-amino-acid polypeptide reads, in one-letter code: Transgelin-2 (199 aa).

Ala2 bears the N-acetylalanine mark. Ser11 carries the post-translational modification Phosphoserine. An N6-acetyllysine mark is found at Lys17 and Lys20. In terms of domain architecture, Calponin-homology (CH) spans 24–136 (PDLEQILIQW…RTLMNLGGLA (113 aa)). Residue Ser163 is modified to Phosphoserine. Lys171 participates in a covalent cross-link: Glycyl lysine isopeptide (Lys-Gly) (interchain with G-Cter in SUMO2). Residues 174 to 199 (IGLQMGTNRGASQAGMTGYGMPRQIL) form a Calponin-like repeat. A Phosphothreonine modification is found at Thr180. 2 positions are modified to omega-N-methylarginine: Arg182 and Arg196.

The protein belongs to the calponin family.

The chain is Transgelin-2 (Tagln2) from Rattus norvegicus (Rat).